The chain runs to 570 residues: Membrane protein insertase YidC (570 aa).

Residues 31 to 60 (QQPVAQTPSVTIDSNGADSSALLNSPNTGE) are compositionally biased toward polar residues. Residues 31 to 79 (QQPVAQTPSVTIDSNGADSSALLNSPNTGELDTPETASKPATAEDSNIS) are disordered. Transmembrane regions (helical) follow at residues 230–250 (PTFS…STPE), 378–398 (WGIA…HLSA), 444–464 (LGGC…YWVL), 487–507 (PYFV…SLNP), and 522–542 (PIIF…YWLV).

Belongs to the OXA1/ALB3/YidC family. Type 1 subfamily. Interacts with the Sec translocase complex via SecD. Specifically interacts with transmembrane segments of nascent integral membrane proteins during membrane integration.

It localises to the cell inner membrane. Its function is as follows. Required for the insertion and/or proper folding and/or complex formation of integral membrane proteins into the membrane. Involved in integration of membrane proteins that insert both dependently and independently of the Sec translocase complex, as well as at least some lipoproteins. Aids folding of multispanning membrane proteins. In Hahella chejuensis (strain KCTC 2396), this protein is Membrane protein insertase YidC.